We begin with the raw amino-acid sequence, 259 residues long: Ditrans,polycis-undecaprenyl-diphosphate synthase ((2E,6E)-farnesyl-diphosphate specific) (259 aa).

The active site involves aspartate 32. Aspartate 32 is a Mg(2+) binding site. Substrate-binding positions include 33-36 (GNGR), tryptophan 37, arginine 45, histidine 49, and 77-79 (STE). The active-site Proton acceptor is the asparagine 80. Residues tryptophan 81, arginine 83, arginine 203, and 209-211 (RIS) contribute to the substrate site. Glutamate 222 lines the Mg(2+) pocket.

The protein belongs to the UPP synthase family. In terms of assembly, homodimer. Requires Mg(2+) as cofactor.

The enzyme catalyses 8 isopentenyl diphosphate + (2E,6E)-farnesyl diphosphate = di-trans,octa-cis-undecaprenyl diphosphate + 8 diphosphate. In terms of biological role, catalyzes the sequential condensation of isopentenyl diphosphate (IPP) with (2E,6E)-farnesyl diphosphate (E,E-FPP) to yield (2Z,6Z,10Z,14Z,18Z,22Z,26Z,30Z,34E,38E)-undecaprenyl diphosphate (di-trans,octa-cis-UPP). UPP is the precursor of glycosyl carrier lipid in the biosynthesis of bacterial cell wall polysaccharide components such as peptidoglycan and lipopolysaccharide. This chain is Ditrans,polycis-undecaprenyl-diphosphate synthase ((2E,6E)-farnesyl-diphosphate specific) (uppS), found in Lactiplantibacillus plantarum (strain ATCC BAA-793 / NCIMB 8826 / WCFS1) (Lactobacillus plantarum).